Reading from the N-terminus, the 732-residue chain is Coagulation factor XIII A chain (732 aa).

The segment at M1–L27 is disordered. S2 carries the N-acetylserine modification. A propeptide spans S2–R38 (activation peptide). Catalysis depends on residues C315, H374, and D397. Ca(2+) contacts are provided by N437, D439, E486, and E491. A glycan (N-linked (GlcNAc...) asparagine) is linked at N614.

It belongs to the transglutaminase superfamily. Transglutaminase family. As to quaternary structure, tetramer of two A chains (F13A1) and two B (F13B) chains. Requires Ca(2+) as cofactor. Post-translationally, the activation peptide is released by thrombin.

It is found in the cytoplasm. Its subcellular location is the secreted. The enzyme catalyses L-glutaminyl-[protein] + L-lysyl-[protein] = [protein]-L-lysyl-N(6)-5-L-glutamyl-[protein] + NH4(+). Its function is as follows. Factor XIII is activated by thrombin and calcium ion to a transglutaminase that catalyzes the formation of gamma-glutamyl-epsilon-lysine cross-links between fibrin chains, thus stabilizing the fibrin clot. Also cross-link alpha-2-plasmin inhibitor, or fibronectin, to the alpha chains of fibrin. This chain is Coagulation factor XIII A chain (F13A1), found in Homo sapiens (Human).